Consider the following 339-residue polypeptide: Phenylalanine--tRNA ligase alpha subunit (339 aa).

Glu254 is a binding site for Mg(2+).

Belongs to the class-II aminoacyl-tRNA synthetase family. Phe-tRNA synthetase alpha subunit type 1 subfamily. As to quaternary structure, tetramer of two alpha and two beta subunits. Mg(2+) serves as cofactor.

The protein resides in the cytoplasm. It carries out the reaction tRNA(Phe) + L-phenylalanine + ATP = L-phenylalanyl-tRNA(Phe) + AMP + diphosphate + H(+). The polypeptide is Phenylalanine--tRNA ligase alpha subunit (Lachnoclostridium phytofermentans (strain ATCC 700394 / DSM 18823 / ISDg) (Clostridium phytofermentans)).